Reading from the N-terminus, the 325-residue chain is MNTSIRINCSKSYDDFVEASKFVGFCLYLIPGAILHVLILRILLIKQRKVFRNNSFFRIFATDSVVSLVLIFWGIFFNRLFMFIPPLCPLVSPLFFEPSLFLKMYYWMYNHARMSKSVAQILMVLNRMCCVISPIGYEKIWNKLAVTTVFVVLALPFFGSWNLLLSRMYIFPSYGGFNASYVKYVQWASLSMFQSIFLLIALCFTIICSSVSLYKLIILPDRIKSAEKSLCFVSLFYSIAFLVVAVSQLIFVFCEVCLKNRLYLLFQFFAFDFLTVGSAVIIMLSSPQLSNFLGFSGTFYRRKASPPGSTVVKIFTSVHNNSSII.

7 helical membrane passes run 25–45, 65–85, 87–107, 144–164, 187–207, 232–252, and 264–284; these read FCLY…ILLI, VVSL…MFIP, LCPL…MYYW, LAVT…WNLL, WASL…FTII, FVSL…LIFV, and LLFQ…IIML.

This sequence belongs to the nematode receptor-like protein srg family.

Its subcellular location is the membrane. The polypeptide is Serpentine receptor class gamma-16 (srg-16) (Caenorhabditis elegans).